We begin with the raw amino-acid sequence, 323 residues long: Cysteine synthase A (323 aa).

Hydrogen sulfide-binding residues include asparagine 8 and arginine 35. N6-(pyridoxal phosphate)lysine is present on lysine 42. Pyridoxal 5'-phosphate is bound by residues asparagine 72 and 177–181; that span reads GTGGT. Hydrogen sulfide is bound at residue leucine 269. A pyridoxal 5'-phosphate-binding site is contributed by serine 273.

Belongs to the cysteine synthase/cystathionine beta-synthase family. In terms of assembly, homodimer. Requires pyridoxal 5'-phosphate as cofactor.

It carries out the reaction O-acetyl-L-serine + hydrogen sulfide = L-cysteine + acetate. The protein operates within amino-acid biosynthesis; L-cysteine biosynthesis; L-cysteine from L-serine: step 2/2. In terms of biological role, two cysteine synthase enzymes are found. Both catalyze the same reaction. Cysteine synthase B can also use thiosulfate in place of sulfide to give cysteine thiosulfonate as a product. The polypeptide is Cysteine synthase A (cysK) (Salmonella typhi).